A 349-amino-acid chain; its full sequence is Sesquiterpene synthase MAC_05714 (349 aa).

The Mg(2+) site is built by Asp91 and Asp96. The DDXXXD motif signature appears at 91-96; it reads DDLFVD. Substrate is bound at residue Arg184. Mg(2+) is bound by residues Asn230, Ser234, and Glu238.

It belongs to the terpene synthase family. Requires Mg(2+) as cofactor.

It carries out the reaction (2E,6E)-farnesyl diphosphate + H2O = (+)-corvol ether B + diphosphate. It catalyses the reaction (2E,6E)-farnesyl diphosphate + H2O = (+)-corvol ether A + diphosphate. Functionally, terpene synthase that catalyzes the conversion of (2E,6E)-farnesyl diphosphate (FPP) into sesquiterpenes which are important for fungi-environment interactions. Produces a mixture consisting of 8 sesquiterpenes including corvol ethers A and B, as well as traces of epizonarene, gamma-cadinene, delta-cadinene, alpha-cadinene, alpha-cadinol, and an unidentified sesquiterpene. Produces both corvol ether A and corvol ether B in similar concentrations. In Metarhizium acridum (strain CQMa 102), this protein is Sesquiterpene synthase MAC_05714.